The chain runs to 673 residues: DNA ligase (673 aa).

Residues 33-37, 82-83, and Glu115 contribute to the NAD(+) site; these read DAEYD and SL. Lys117 serves as the catalytic N6-AMP-lysine intermediate. NAD(+) contacts are provided by Arg138, Glu175, Lys292, and Lys316. Cys410, Cys413, Cys428, and Cys434 together coordinate Zn(2+). A BRCT domain is found at 593–673; it reads VGDNPFKEKT…TFLAWSKPYL (81 aa).

Belongs to the NAD-dependent DNA ligase family. LigA subfamily. It depends on Mg(2+) as a cofactor. Mn(2+) serves as cofactor.

The enzyme catalyses NAD(+) + (deoxyribonucleotide)n-3'-hydroxyl + 5'-phospho-(deoxyribonucleotide)m = (deoxyribonucleotide)n+m + AMP + beta-nicotinamide D-nucleotide.. In terms of biological role, DNA ligase that catalyzes the formation of phosphodiester linkages between 5'-phosphoryl and 3'-hydroxyl groups in double-stranded DNA using NAD as a coenzyme and as the energy source for the reaction. It is essential for DNA replication and repair of damaged DNA. The sequence is that of DNA ligase from Pasteurella multocida (strain Pm70).